A 252-amino-acid chain; its full sequence is 2-succinyl-6-hydroxy-2,4-cyclohexadiene-1-carboxylate synthase (252 aa).

The protein belongs to the AB hydrolase superfamily. MenH family. In terms of assembly, monomer.

The enzyme catalyses 5-enolpyruvoyl-6-hydroxy-2-succinyl-cyclohex-3-ene-1-carboxylate = (1R,6R)-6-hydroxy-2-succinyl-cyclohexa-2,4-diene-1-carboxylate + pyruvate. The protein operates within quinol/quinone metabolism; 1,4-dihydroxy-2-naphthoate biosynthesis; 1,4-dihydroxy-2-naphthoate from chorismate: step 3/7. It participates in quinol/quinone metabolism; menaquinone biosynthesis. In terms of biological role, catalyzes a proton abstraction reaction that results in 2,5-elimination of pyruvate from 2-succinyl-5-enolpyruvyl-6-hydroxy-3-cyclohexene-1-carboxylate (SEPHCHC) and the formation of 2-succinyl-6-hydroxy-2,4-cyclohexadiene-1-carboxylate (SHCHC). The chain is 2-succinyl-6-hydroxy-2,4-cyclohexadiene-1-carboxylate synthase from Escherichia coli (strain ATCC 8739 / DSM 1576 / NBRC 3972 / NCIMB 8545 / WDCM 00012 / Crooks).